A 136-amino-acid chain; its full sequence is Large ribosomal subunit protein uL16 (136 aa).

This sequence belongs to the universal ribosomal protein uL16 family. Part of the 50S ribosomal subunit.

Binds 23S rRNA and is also seen to make contacts with the A and possibly P site tRNAs. The protein is Large ribosomal subunit protein uL16 of Haemophilus influenzae (strain 86-028NP).